The following is a 269-amino-acid chain: 3-methyl-2-oxobutanoate hydroxymethyltransferase (269 aa).

Asp-49 and Asp-88 together coordinate Mg(2+). 3-methyl-2-oxobutanoate contacts are provided by residues 49–50, Asp-88, and Lys-118; that span reads DS. Residue Glu-120 coordinates Mg(2+). Glu-186 serves as the catalytic Proton acceptor.

This sequence belongs to the PanB family. As to quaternary structure, homodecamer; pentamer of dimers. The cofactor is Mg(2+).

It localises to the cytoplasm. It catalyses the reaction 3-methyl-2-oxobutanoate + (6R)-5,10-methylene-5,6,7,8-tetrahydrofolate + H2O = 2-dehydropantoate + (6S)-5,6,7,8-tetrahydrofolate. It participates in cofactor biosynthesis; (R)-pantothenate biosynthesis; (R)-pantoate from 3-methyl-2-oxobutanoate: step 1/2. Catalyzes the reversible reaction in which hydroxymethyl group from 5,10-methylenetetrahydrofolate is transferred onto alpha-ketoisovalerate to form ketopantoate. In Pelobacter propionicus (strain DSM 2379 / NBRC 103807 / OttBd1), this protein is 3-methyl-2-oxobutanoate hydroxymethyltransferase.